Here is a 202-residue protein sequence, read N- to C-terminus: MTLWLGPGPLVLASQSRARQALLSNAGIPFDAIPADIDERGIAKASGLSAPGEIAALLAQEKAAFVSNHHPGRLVLGADQTLALGARGFNKPADRNEAAKQLRELAGRRHELHAAIALVRNGVTLFADVSIARMTMRPLNDEEIAAYLDLAGDKATSSVGGYQVEGLGVHLFDGIHGDHFTILGLPLLPLLGFLRSQKLLAF.

D79 acts as the Proton acceptor in catalysis.

The protein belongs to the Maf family. A divalent metal cation is required as a cofactor.

The protein localises to the cytoplasm. It carries out the reaction a ribonucleoside 5'-triphosphate + H2O = a ribonucleoside 5'-phosphate + diphosphate + H(+). The catalysed reaction is a 2'-deoxyribonucleoside 5'-triphosphate + H2O = a 2'-deoxyribonucleoside 5'-phosphate + diphosphate + H(+). In terms of biological role, nucleoside triphosphate pyrophosphatase. May have a dual role in cell division arrest and in preventing the incorporation of modified nucleotides into cellular nucleic acids. In Rhodopseudomonas palustris (strain HaA2), this protein is Nucleoside triphosphate pyrophosphatase.